Consider the following 305-residue polypeptide: tRNA dimethylallyltransferase (305 aa).

8–15 (GPTAVGKT) is a binding site for ATP. Position 10 to 15 (10 to 15 (TAVGKT)) interacts with substrate. The interval 33–36 (DSRQ) is interaction with substrate tRNA.

The protein belongs to the IPP transferase family. Monomer. The cofactor is Mg(2+).

It carries out the reaction adenosine(37) in tRNA + dimethylallyl diphosphate = N(6)-dimethylallyladenosine(37) in tRNA + diphosphate. Its function is as follows. Catalyzes the transfer of a dimethylallyl group onto the adenine at position 37 in tRNAs that read codons beginning with uridine, leading to the formation of N6-(dimethylallyl)adenosine (i(6)A). The polypeptide is tRNA dimethylallyltransferase (Thermotoga petrophila (strain ATCC BAA-488 / DSM 13995 / JCM 10881 / RKU-1)).